We begin with the raw amino-acid sequence, 1091 residues long: DNA mismatch repair protein Msh3 (1091 aa).

Composition is skewed to low complexity over residues 1–15 (MPRGKSASGGSTAAG) and 24–40 (LSRFFRSAGSLRSSASS). The disordered stretch occupies residues 1–84 (MPRGKSASGG…EENISVASHH (84 aa)). Ser33 carries the post-translational modification Phosphoserine. Over residues 43–54 (PAEKVTEGDSRK) the composition is skewed to basic and acidic residues. Residue 850–857 (GPNMGGKS) coordinates ATP.

The protein belongs to the DNA mismatch repair MutS family. MSH3 subfamily. Component of the DNA mismatch repair (MMR) complex composed at least of MSH2, MSH3, MSH6, PMS1 and MLH1. Heterodimer consisting of MSH2-MSH3 (MutS beta). Forms a ternary complex with MutL alpha (MLH1-PMS1). Interacts with EXO1. Interacts with MCM9.

Component of the post-replicative DNA mismatch repair system (MMR). Heterodimerizes with MSH2 to form MutS beta which binds to DNA mismatches thereby initiating DNA repair. When bound, the MutS beta heterodimer bends the DNA helix and shields approximately 20 base pairs. MutS beta recognizes large insertion-deletion loops (IDL) up to 13 nucleotides long. After mismatch binding, forms a ternary complex with the MutL alpha heterodimer, which is thought to be responsible for directing the downstream MMR events, including strand discrimination, excision, and resynthesis. The sequence is that of DNA mismatch repair protein Msh3 (Msh3) from Mus musculus (Mouse).